The following is a 464-amino-acid chain: Major capsid protein (464 aa).

Belongs to the NCLDV major capsid protein family. As to quaternary structure, homotrimer. Post-translationally, the N-terminus is blocked.

Its subcellular location is the virion. In terms of biological role, major capsid protein that self assembles to form an icosahedral capsid. Represents around 50% of the total virion protein mass. This is Major capsid protein (MCP) from Tipula (TIV).